A 485-amino-acid chain; its full sequence is Glucose-6-phosphate 1-dehydrogenase (485 aa).

NADP(+)-binding positions include Arg46, 89–90 (DI), and Lys144. Positions 174, 178, 212, and 231 each coordinate substrate. The active-site Proton acceptor is His236. Lys334 provides a ligand contact to substrate.

This sequence belongs to the glucose-6-phosphate dehydrogenase family.

It catalyses the reaction D-glucose 6-phosphate + NADP(+) = 6-phospho-D-glucono-1,5-lactone + NADPH + H(+). It functions in the pathway carbohydrate degradation; pentose phosphate pathway; D-ribulose 5-phosphate from D-glucose 6-phosphate (oxidative stage): step 1/3. Functionally, catalyzes the oxidation of glucose 6-phosphate to 6-phosphogluconolactone. The sequence is that of Glucose-6-phosphate 1-dehydrogenase from Zymomonas mobilis subsp. mobilis (strain ATCC 31821 / ZM4 / CP4).